The following is a 298-amino-acid chain: UDP-N-acetylenolpyruvoylglucosamine reductase (298 aa).

The FAD-binding PCMH-type domain occupies 27–191; that stretch reads TGGEADVFVM…LDATFSLALE (165 aa). Arg-170 is an active-site residue. The active-site Proton donor is Ser-220. The active site involves Glu-290.

Belongs to the MurB family. FAD is required as a cofactor.

The protein resides in the cytoplasm. The enzyme catalyses UDP-N-acetyl-alpha-D-muramate + NADP(+) = UDP-N-acetyl-3-O-(1-carboxyvinyl)-alpha-D-glucosamine + NADPH + H(+). The protein operates within cell wall biogenesis; peptidoglycan biosynthesis. In terms of biological role, cell wall formation. In Listeria monocytogenes serotype 4a (strain HCC23), this protein is UDP-N-acetylenolpyruvoylglucosamine reductase.